The primary structure comprises 336 residues: Tryptophan--tRNA ligase (336 aa).

ATP is bound by residues 13 to 15 and 21 to 22; these read QPS and GN. The short motif at 14–22 is the 'HIGH' region element; it reads PSGNLTIGN. L-tryptophan is bound at residue aspartate 140. ATP contacts are provided by residues 152-154, isoleucine 191, and 200-204; these read GQD and KMSKS. Positions 200–204 match the 'KMSKS' region motif; it reads KMSKS.

The protein belongs to the class-I aminoacyl-tRNA synthetase family. Homodimer.

Its subcellular location is the cytoplasm. The enzyme catalyses tRNA(Trp) + L-tryptophan + ATP = L-tryptophyl-tRNA(Trp) + AMP + diphosphate + H(+). In terms of biological role, catalyzes the attachment of tryptophan to tRNA(Trp). The polypeptide is Tryptophan--tRNA ligase (Buchnera aphidicola subsp. Schizaphis graminum (strain Sg)).